Here is a 134-residue protein sequence, read N- to C-terminus: Citrolysin protein 2 (134 aa).

The sequence is that of Citrolysin protein 2 from Citrobacter freundii.